A 155-amino-acid chain; its full sequence is Arginine repressor (155 aa).

Belongs to the ArgR family.

It localises to the cytoplasm. The protein operates within amino-acid biosynthesis; L-arginine biosynthesis [regulation]. Functionally, regulates arginine biosynthesis genes. This is Arginine repressor from Mannheimia succiniciproducens (strain KCTC 0769BP / MBEL55E).